Reading from the N-terminus, the 897-residue chain is Valine--tRNA ligase (897 aa).

The 'HIGH' region signature appears at 46–56 (PNVTGSLHMGH). The 'KMSKS' region motif lies at 532-536 (KMSKT). Residue K535 coordinates ATP. Residues 839–897 (LRRSLEKLDKESGVLAARLDNASYLANAPAELVTESRAKLAEQRAQAAILAEQLARLEN) are a coiled coil.

Belongs to the class-I aminoacyl-tRNA synthetase family. ValS type 1 subfamily. Monomer.

It is found in the cytoplasm. It carries out the reaction tRNA(Val) + L-valine + ATP = L-valyl-tRNA(Val) + AMP + diphosphate. Functionally, catalyzes the attachment of valine to tRNA(Val). As ValRS can inadvertently accommodate and process structurally similar amino acids such as threonine, to avoid such errors, it has a 'posttransfer' editing activity that hydrolyzes mischarged Thr-tRNA(Val) in a tRNA-dependent manner. The polypeptide is Valine--tRNA ligase (Gloeobacter violaceus (strain ATCC 29082 / PCC 7421)).